The chain runs to 625 residues: Vicilin-like antimicrobial peptides 2-3 (625 aa).

Disordered regions lie at residues 120 to 152 (QQKR…QQRE) and 180 to 212 (RQHG…NPYY). Residues 198-212 (RYEEGEEKQSDNPYY) show a composition bias toward basic and acidic residues. Cupin type-1 domains follow at residues 230-369 (SVLE…ERLR) and 414-584 (YNLF…KEVE). A disordered region spans residues 594–614 (IFFPGPRQHQQQSPRSTKQQQ). Residues 601–614 (QHQQQSPRSTKQQQ) show a composition bias toward low complexity.

It belongs to the 7S seed storage protein family.

Its subcellular location is the secreted. Functionally, antimicrobial peptides 2b, 2c and 2d have antibacterial and antifungal activity against a range of species. This Macadamia integrifolia (Macadamia nut) protein is Vicilin-like antimicrobial peptides 2-3.